We begin with the raw amino-acid sequence, 303 residues long: UDP-3-O-acyl-N-acetylglucosamine deacetylase (303 aa).

Histidine 78, histidine 237, and aspartate 241 together coordinate Zn(2+). Histidine 264 (proton donor) is an active-site residue.

It belongs to the LpxC family. Requires Zn(2+) as cofactor.

It carries out the reaction a UDP-3-O-[(3R)-3-hydroxyacyl]-N-acetyl-alpha-D-glucosamine + H2O = a UDP-3-O-[(3R)-3-hydroxyacyl]-alpha-D-glucosamine + acetate. The protein operates within glycolipid biosynthesis; lipid IV(A) biosynthesis; lipid IV(A) from (3R)-3-hydroxytetradecanoyl-[acyl-carrier-protein] and UDP-N-acetyl-alpha-D-glucosamine: step 2/6. Catalyzes the hydrolysis of UDP-3-O-myristoyl-N-acetylglucosamine to form UDP-3-O-myristoylglucosamine and acetate, the committed step in lipid A biosynthesis. The chain is UDP-3-O-acyl-N-acetylglucosamine deacetylase from Coxiella burnetii (strain CbuG_Q212) (Coxiella burnetii (strain Q212)).